The chain runs to 95 residues: Small ribosomal subunit protein bS20 (95 aa).

This sequence belongs to the bacterial ribosomal protein bS20 family.

Functionally, binds directly to 16S ribosomal RNA. This chain is Small ribosomal subunit protein bS20, found in Fervidobacterium nodosum (strain ATCC 35602 / DSM 5306 / Rt17-B1).